We begin with the raw amino-acid sequence, 488 residues long: Proline--tRNA ligase (488 aa).

It belongs to the class-II aminoacyl-tRNA synthetase family. ProS type 3 subfamily. Homodimer.

The protein resides in the cytoplasm. The enzyme catalyses tRNA(Pro) + L-proline + ATP = L-prolyl-tRNA(Pro) + AMP + diphosphate. In terms of biological role, catalyzes the attachment of proline to tRNA(Pro) in a two-step reaction: proline is first activated by ATP to form Pro-AMP and then transferred to the acceptor end of tRNA(Pro). The chain is Proline--tRNA ligase from Borrelia garinii subsp. bavariensis (strain ATCC BAA-2496 / DSM 23469 / PBi) (Borreliella bavariensis).